Reading from the N-terminus, the 214-residue chain is Adenylate kinase (214 aa).

10–15 contacts ATP; the sequence is GAGKGT. Positions 30-59 are NMP; that stretch reads STGDMLRAAIKAGTELGKQAKAVIDAGQLV. AMP contacts are provided by residues Thr-31, Arg-36, 57–59, 85–88, and Gln-92; these read QLV and GFPR. The segment at 122–159 is LID; sequence GRRAHLPSGRTYHVVYNPPKVEGKDDVTGEDLVVRDDD. ATP-binding positions include Arg-123 and 132–133; that span reads TY. AMP-binding residues include Arg-156 and Arg-167. Lys-200 is a binding site for ATP.

This sequence belongs to the adenylate kinase family. Monomer.

The protein resides in the cytoplasm. The catalysed reaction is AMP + ATP = 2 ADP. It participates in purine metabolism; AMP biosynthesis via salvage pathway; AMP from ADP: step 1/1. In terms of biological role, catalyzes the reversible transfer of the terminal phosphate group between ATP and AMP. Plays an important role in cellular energy homeostasis and in adenine nucleotide metabolism. This is Adenylate kinase from Vibrio vulnificus (strain CMCP6).